Consider the following 438-residue polypeptide: Adenosylhomocysteinase (438 aa).

Substrate-binding residues include threonine 64, aspartate 139, and glutamate 164. 165–167 (TTT) provides a ligand contact to NAD(+). 2 residues coordinate substrate: lysine 194 and aspartate 198. NAD(+) contacts are provided by residues asparagine 199, 228–233 (GYGDVG), glutamate 251, asparagine 286, 307–309 (IGH), and asparagine 352.

It belongs to the adenosylhomocysteinase family. Requires NAD(+) as cofactor.

The protein resides in the cytoplasm. The enzyme catalyses S-adenosyl-L-homocysteine + H2O = L-homocysteine + adenosine. The protein operates within amino-acid biosynthesis; L-homocysteine biosynthesis; L-homocysteine from S-adenosyl-L-homocysteine: step 1/1. May play a key role in the regulation of the intracellular concentration of adenosylhomocysteine. This chain is Adenosylhomocysteinase, found in Coxiella burnetii (strain CbuK_Q154) (Coxiella burnetii (strain Q154)).